We begin with the raw amino-acid sequence, 142 residues long: Large ribosomal subunit protein uL22c (142 aa).

This sequence belongs to the universal ribosomal protein uL22 family. In terms of assembly, part of the 50S ribosomal subunit.

Its subcellular location is the plastid. It localises to the chloroplast. Functionally, this protein binds specifically to 23S rRNA. The globular domain of the protein is located near the polypeptide exit tunnel on the outside of the subunit, while an extended beta-hairpin is found that lines the wall of the exit tunnel in the center of the 70S ribosome. This Picea abies (Norway spruce) protein is Large ribosomal subunit protein uL22c (rpl22).